The sequence spans 321 residues: Phosphate acyltransferase (321 aa).

Belongs to the PlsX family. As to quaternary structure, homodimer. Probably interacts with PlsY.

It localises to the cytoplasm. The enzyme catalyses a fatty acyl-[ACP] + phosphate = an acyl phosphate + holo-[ACP]. Its pathway is lipid metabolism; phospholipid metabolism. In terms of biological role, catalyzes the reversible formation of acyl-phosphate (acyl-PO(4)) from acyl-[acyl-carrier-protein] (acyl-ACP). This enzyme utilizes acyl-ACP as fatty acyl donor, but not acyl-CoA. The chain is Phosphate acyltransferase from Chlamydia trachomatis serovar A (strain ATCC VR-571B / DSM 19440 / HAR-13).